The sequence spans 557 residues: Low affinity inorganic phosphate transporter 8 (557 aa).

The Cytoplasmic segment spans residues 1 to 20 (MATSHGVLRSLDNAKTQSYH). Residues 21–41 (YLAIVIAGMGFFTDAYDLFCI) form a helical membrane-spanning segment. Residues 42 to 70 (TAVTKLIGRLYYSDPTNHSPGILPTNVNN) lie on the Extracellular side of the membrane. A helical transmembrane segment spans residues 71–91 (AITGVALCGTLAGQLFFGWLG). Over 92–98 (DKLGRKK) the chain is Cytoplasmic. A helical membrane pass occupies residues 99–119 (VYGITLTTMVGFALLSGLSFG). Residues 120-130 (STPKTVVTSLC) lie on the Extracellular side of the membrane. The chain crosses the membrane as a helical span at residues 131 to 151 (FFRFWLGFGIGGDYPLSAVIM). The Cytoplasmic segment spans residues 152-162 (SEYANQKTRGS). The helical transmembrane segment at 163-183 (FIAAVFAMQGVGILVAGGVAM) threads the bilayer. Over 184-210 (FVSKLFLLYFPAPDFETDAVLSTQPEG) the chain is Extracellular. Residues 211–231 (DFVWRIVLMFGAVPAALTYYW) traverse the membrane as a helical segment. At 232-294 (RMKMPETARY…LFSSEFLNRH (63 aa)) the chain is on the cytoplasmic side. Residues 295-315 (GLHLLGTTSTWFLLDIAFYSL) traverse the membrane as a helical segment. Residues 316 to 346 (QLTQKDIYPTSGLVYKASKMNAIEEVFQLSR) lie on the Extracellular side of the membrane. Residues 347–367 (AMFAVALIATVPGYWCTVFLI) form a helical membrane-spanning segment. The Cytoplasmic portion of the chain corresponds to 368–369 (EK). A helical membrane pass occupies residues 370–390 (IGRFRIQLIGFLVMSVCMWFL). At 391 to 414 (GHNYRSFRGEESACKNGSKYSFCN) the chain is on the extracellular side. An N-linked (GlcNAc...) asparagine glycan is attached at Asn-406. A helical transmembrane segment spans residues 415 to 435 (GNPVMFAILFGLTLFFANFGP). The Cytoplasmic segment spans residues 436 to 457 (NSTTFIVPAELFPARLRSTCHG). The chain crosses the membrane as a helical span at residues 458–478 (ISAAAGKSGAIVGAFGVQSYI). Residues 479-490 (GNSHDKSKGTKQ) lie on the Extracellular side of the membrane. The chain crosses the membrane as a helical span at residues 491–511 (AIMALAVVNLLGFFFTFLVPE). Residues 512–557 (TQGRSLEEISGEEKDFQGNNADEEISGERNGTRNASVDKSPETSMV) are Cytoplasmic-facing. Residues 519-557 (EISGEEKDFQGNNADEEISGERNGTRNASVDKSPETSMV) form a disordered region. The span at 543–557 (TRNASVDKSPETSMV) shows a compositional bias: polar residues.

The protein belongs to the major facilitator superfamily. Phosphate:H(+) symporter (TC 2.A.1.9) family.

It is found in the cell membrane. The catalysed reaction is phosphate(in) + H(+)(in) = phosphate(out) + H(+)(out). Functionally, low-affinity transporter for external inorganic phosphate (Pi) that may be involved in the acquisition of phosphate released by arbuscular mycorrhizal (AM) fungi (e.g. Glomus versiforme and G.intraradices) during AM symbiosis; not required for mycorrhizal arbuscule development. The polypeptide is Low affinity inorganic phosphate transporter 8 (Medicago truncatula (Barrel medic)).